The chain runs to 139 residues: Small ribosomal subunit protein uS12 (139 aa).

Position 102 is a 3-methylthioaspartic acid (Asp102).

Belongs to the universal ribosomal protein uS12 family. Part of the 30S ribosomal subunit. Contacts proteins S8 and S17. May interact with IF1 in the 30S initiation complex.

Its function is as follows. With S4 and S5 plays an important role in translational accuracy. Functionally, interacts with and stabilizes bases of the 16S rRNA that are involved in tRNA selection in the A site and with the mRNA backbone. Located at the interface of the 30S and 50S subunits, it traverses the body of the 30S subunit contacting proteins on the other side and probably holding the rRNA structure together. The combined cluster of proteins S8, S12 and S17 appears to hold together the shoulder and platform of the 30S subunit. In Phytoplasma australiense, this protein is Small ribosomal subunit protein uS12.